Consider the following 514-residue polypeptide: Ribonuclease Y (514 aa).

A helical membrane pass occupies residues 3–23 (VLWMVLGLAIGIAVGAAAGYI). A KH domain is found at 203-266 (TVKAVELPSD…EVARIAMERL (64 aa)). The region spanning 330–423 (VLAHSVEVAN…VATADAVSAA (94 aa)) is the HD domain.

The protein belongs to the RNase Y family.

The protein resides in the cell membrane. In terms of biological role, endoribonuclease that initiates mRNA decay. This is Ribonuclease Y from Rubrobacter xylanophilus (strain DSM 9941 / JCM 11954 / NBRC 16129 / PRD-1).